The primary structure comprises 484 residues: Adenylosuccinate lyase (484 aa).

The residue at position 2 (Ala2) is an N-acetylalanine. Residues 20–21 (RY), 85–87 (RHD), and 111–112 (TS) contribute to the substrate site. The residue at position 147 (Lys147) is an N6-acetyllysine. Residue His159 is the Proton donor/acceptor of the active site. Position 241 (Gln241) interacts with substrate. Ser289 serves as the catalytic Proton donor/acceptor. An N6-acetyllysine modification is found at Lys295. Substrate contacts are provided by Arg303, Arg329, Ser334, and Arg338. Lys415 participates in a covalent cross-link: Glycyl lysine isopeptide (Lys-Gly) (interchain with G-Cter in SUMO1).

Belongs to the lyase 1 family. Adenylosuccinate lyase subfamily. As to quaternary structure, homotetramer. Residues from neighboring subunits contribute catalytic and substrate-binding residues to each active site.

The enzyme catalyses N(6)-(1,2-dicarboxyethyl)-AMP = fumarate + AMP. It catalyses the reaction (2S)-2-[5-amino-1-(5-phospho-beta-D-ribosyl)imidazole-4-carboxamido]succinate = 5-amino-1-(5-phospho-beta-D-ribosyl)imidazole-4-carboxamide + fumarate. It functions in the pathway purine metabolism; AMP biosynthesis via de novo pathway; AMP from IMP: step 2/2. Its pathway is purine metabolism; IMP biosynthesis via de novo pathway; 5-amino-1-(5-phospho-D-ribosyl)imidazole-4-carboxamide from 5-amino-1-(5-phospho-D-ribosyl)imidazole-4-carboxylate: step 2/2. Functionally, catalyzes two non-sequential steps in de novo AMP synthesis: converts (S)-2-(5-amino-1-(5-phospho-D-ribosyl)imidazole-4-carboxamido)succinate (SAICAR) to fumarate plus 5-amino-1-(5-phospho-D-ribosyl)imidazole-4-carboxamide, and thereby also contributes to de novo IMP synthesis, and converts succinyladenosine monophosphate (SAMP) to AMP and fumarate. The polypeptide is Adenylosuccinate lyase (ADSL) (Macaca fascicularis (Crab-eating macaque)).